Here is a 226-residue protein sequence, read N- to C-terminus: ATP synthase subunit a (226 aa).

Transmembrane regions (helical) follow at residues 20-40 (LNWF…WLMP), 74-94 (FVSL…PYIF), 100-120 (LTLT…YGWI), 162-182 (LTAN…TGPM), and 187-207 (IILS…SAVA).

This sequence belongs to the ATPase A chain family. In terms of assembly, F-type ATPases have 2 components, CF(1) - the catalytic core - and CF(0) - the membrane proton channel. CF(1) has five subunits: alpha(3), beta(3), gamma(1), delta(1), epsilon(1). CF(0) has three main subunits: a, b and c.

It localises to the mitochondrion inner membrane. Functionally, mitochondrial membrane ATP synthase (F(1)F(0) ATP synthase or Complex V) produces ATP from ADP in the presence of a proton gradient across the membrane which is generated by electron transport complexes of the respiratory chain. F-type ATPases consist of two structural domains, F(1) - containing the extramembraneous catalytic core and F(0) - containing the membrane proton channel, linked together by a central stalk and a peripheral stalk. During catalysis, ATP synthesis in the catalytic domain of F(1) is coupled via a rotary mechanism of the central stalk subunits to proton translocation. Key component of the proton channel; it may play a direct role in the translocation of protons across the membrane. The sequence is that of ATP synthase subunit a (mt:ATPase6) from Aedes albopictus (Asian tiger mosquito).